We begin with the raw amino-acid sequence, 231 residues long: 7-cyano-7-deazaguanine synthase (231 aa).

Residue 8 to 18 participates in ATP binding; that stretch reads FSGGQDSTTCL. 4 residues coordinate Zn(2+): Cys-188, Cys-197, Cys-200, and Cys-203.

The protein belongs to the QueC family. Zn(2+) is required as a cofactor.

The catalysed reaction is 7-carboxy-7-deazaguanine + NH4(+) + ATP = 7-cyano-7-deazaguanine + ADP + phosphate + H2O + H(+). It functions in the pathway purine metabolism; 7-cyano-7-deazaguanine biosynthesis. Functionally, catalyzes the ATP-dependent conversion of 7-carboxy-7-deazaguanine (CDG) to 7-cyano-7-deazaguanine (preQ(0)). In Salmonella schwarzengrund (strain CVM19633), this protein is 7-cyano-7-deazaguanine synthase.